The chain runs to 564 residues: Dihydroxy-acid dehydratase (564 aa).

Asp-80 serves as a coordination point for Mg(2+). Position 121 (Cys-121) interacts with [2Fe-2S] cluster. Asp-122 and Lys-123 together coordinate Mg(2+). The residue at position 123 (Lys-123) is an N6-carboxylysine. [2Fe-2S] cluster is bound at residue Cys-194. Glu-447 is a binding site for Mg(2+). Ser-473 (proton acceptor) is an active-site residue.

It belongs to the IlvD/Edd family. As to quaternary structure, homodimer. It depends on [2Fe-2S] cluster as a cofactor. Requires Mg(2+) as cofactor.

It carries out the reaction (2R)-2,3-dihydroxy-3-methylbutanoate = 3-methyl-2-oxobutanoate + H2O. It catalyses the reaction (2R,3R)-2,3-dihydroxy-3-methylpentanoate = (S)-3-methyl-2-oxopentanoate + H2O. Its pathway is amino-acid biosynthesis; L-isoleucine biosynthesis; L-isoleucine from 2-oxobutanoate: step 3/4. It participates in amino-acid biosynthesis; L-valine biosynthesis; L-valine from pyruvate: step 3/4. Functionally, functions in the biosynthesis of branched-chain amino acids. Catalyzes the dehydration of (2R,3R)-2,3-dihydroxy-3-methylpentanoate (2,3-dihydroxy-3-methylvalerate) into 2-oxo-3-methylpentanoate (2-oxo-3-methylvalerate) and of (2R)-2,3-dihydroxy-3-methylbutanoate (2,3-dihydroxyisovalerate) into 2-oxo-3-methylbutanoate (2-oxoisovalerate), the penultimate precursor to L-isoleucine and L-valine, respectively. In Listeria monocytogenes serotype 4a (strain HCC23), this protein is Dihydroxy-acid dehydratase.